Reading from the N-terminus, the 185-residue chain is A-type ATP synthase subunit E (185 aa).

This sequence belongs to the V-ATPase E subunit family. Has multiple subunits with at least A(3), B(3), C, D, E, F, H, I and proteolipid K(x).

The protein resides in the cell membrane. Its function is as follows. Component of the A-type ATP synthase that produces ATP from ADP in the presence of a proton gradient across the membrane. This Thermoplasma volcanium (strain ATCC 51530 / DSM 4299 / JCM 9571 / NBRC 15438 / GSS1) protein is A-type ATP synthase subunit E.